The primary structure comprises 138 residues: Large ribosomal subunit protein uL16 (138 aa).

Residues 1-13 (MLQPSRRKYRKEQ) show a composition bias toward basic residues. The segment at 1–22 (MLQPSRRKYRKEQKGRNTGLAT) is disordered.

This sequence belongs to the universal ribosomal protein uL16 family. In terms of assembly, part of the 50S ribosomal subunit.

In terms of biological role, binds 23S rRNA and is also seen to make contacts with the A and possibly P site tRNAs. This is Large ribosomal subunit protein uL16 from Bordetella petrii (strain ATCC BAA-461 / DSM 12804 / CCUG 43448).